The primary structure comprises 251 residues: Pantothenate synthetase (251 aa).

28–35 (MGALHTGH) lines the ATP pocket. Residue H35 is the Proton donor of the active site. Q59 is a binding site for (R)-pantoate. Beta-alanine is bound at residue Q59. 145 to 148 (GEKD) serves as a coordination point for ATP. Q151 is a binding site for (R)-pantoate. ATP-binding positions include V174 and 182–185 (KSSR).

Belongs to the pantothenate synthetase family. In terms of assembly, homodimer.

Its subcellular location is the cytoplasm. It catalyses the reaction (R)-pantoate + beta-alanine + ATP = (R)-pantothenate + AMP + diphosphate + H(+). Its pathway is cofactor biosynthesis; (R)-pantothenate biosynthesis; (R)-pantothenate from (R)-pantoate and beta-alanine: step 1/1. Catalyzes the condensation of pantoate with beta-alanine in an ATP-dependent reaction via a pantoyl-adenylate intermediate. The chain is Pantothenate synthetase from Bdellovibrio bacteriovorus (strain ATCC 15356 / DSM 50701 / NCIMB 9529 / HD100).